The primary structure comprises 39 residues: Photosystem II reaction center protein J (39 aa).

Residues 7–27 (IPLWLIATVGGTAALTVVGLF) traverse the membrane as a helical segment.

It belongs to the PsbJ family. As to quaternary structure, PSII is composed of 1 copy each of membrane proteins PsbA, PsbB, PsbC, PsbD, PsbE, PsbF, PsbH, PsbI, PsbJ, PsbK, PsbL, PsbM, PsbT, PsbX, PsbY, PsbZ, Psb30/Ycf12, at least 3 peripheral proteins of the oxygen-evolving complex and a large number of cofactors. It forms dimeric complexes.

The protein localises to the plastid. The protein resides in the chloroplast thylakoid membrane. Functionally, one of the components of the core complex of photosystem II (PSII). PSII is a light-driven water:plastoquinone oxidoreductase that uses light energy to abstract electrons from H(2)O, generating O(2) and a proton gradient subsequently used for ATP formation. It consists of a core antenna complex that captures photons, and an electron transfer chain that converts photonic excitation into a charge separation. In Rhodomonas salina (Cryptomonas salina), this protein is Photosystem II reaction center protein J.